The chain runs to 198 residues: Photosystem I assembly protein Ycf4 (198 aa).

2 consecutive transmembrane segments (helical) span residues 35–57 (WFYNIVMLLGGIGFLIVGISSYI) and 70–92 (IIFFPQGITMCFYGTCGILFSIN).

The protein belongs to the Ycf4 family.

The protein localises to the plastid. It localises to the chloroplast thylakoid membrane. In terms of biological role, seems to be required for the assembly of the photosystem I complex. This chain is Photosystem I assembly protein Ycf4, found in Euglena gracilis.